A 524-amino-acid chain; its full sequence is MSQGSPGAWAPLDPTSGSSASPNPFVHELHLSGLQRVKFCLLGVLLAPIRVLLAFIVLFLLWPFAWLQVAGLTEEQLQEPITGWRKTVCHNGVLGLSRLLFFLLGFLRIRVRGQRASRLEAPVLVAAPHSTFFDPIVLLPCDLPKVVSRAENLSVPVIGALLRFNQAILVSRHDPASRRRVVEEVRRRATSGGKWPQVLFFPEGTCSNKKALLKFKPGAFIAGVPVQPVLIRYPNSLDTTSWAWRGPGVLKVLWLTASQPCSIVDVEFLPVYQPSLEESKDPTLYANNVQRVMAQALGIPATECEFVGSLPVIVVGQLKVALEPQLWELAKVLQKAGLSPGFVDMGAEPGRSRMISQEAFAQQLQLSDPQTVAGAFSYFQQDAKGLVDFRNVALALAALDGGRSLEELTRLAFELFAEEQAEGSDRLLYKDGFSTILHLLLGSPRPAATTLHAELCQPGCSQGLSLCQFQNFSLHDPLYGKLFSAYLRPPHKPRSTSQIPNASSPSSPTALANGTVQAPKQKGD.

2 helical membrane passes run 40–62 (CLLG…FLLW) and 87–107 (TVCH…LGFL). The HXXXXD motif signature appears at 129–134 (HSTFFD). An N-linked (GlcNAc...) asparagine glycan is attached at Asn152. The tract at residues 490–524 (PHKPRSTSQIPNASSPSSPTALANGTVQAPKQKGD) is disordered. Residues 495 to 518 (STSQIPNASSPSSPTALANGTVQA) are compositionally biased toward polar residues.

It belongs to the 1-acyl-sn-glycerol-3-phosphate acyltransferase family. Widely expressed with much higher level in brain. Expressed in erythroleukemic cells but not in reticulocytes.

The protein localises to the endoplasmic reticulum membrane. The catalysed reaction is a 1-acyl-sn-glycero-3-phosphoethanolamine + an acyl-CoA = a 1,2-diacyl-sn-glycero-3-phosphoethanolamine + CoA. It catalyses the reaction a 1-O-(1Z-alkenyl)-sn-glycero-3-phosphoethanolamine + an acyl-CoA = a 1-O-(1Z-alkenyl)-2-acyl-sn-glycero-3-phosphoethanolamine + CoA. The enzyme catalyses a 1-acyl-sn-glycero-3-phosphocholine + an acyl-CoA = a 1,2-diacyl-sn-glycero-3-phosphocholine + CoA. It carries out the reaction a 1-O-alkyl-sn-glycero-3-phosphocholine + acetyl-CoA = a 1-O-alkyl-2-acetyl-sn-glycero-3-phosphocholine + CoA. The catalysed reaction is a 1-acyl-sn-glycero-3-phospho-L-serine + an acyl-CoA = a 1,2-diacyl-sn-glycero-3-phospho-L-serine + CoA. It catalyses the reaction octanoyl-CoA + a 1-acyl-sn-glycero-3-phosphoethanolamine = 1-acyl-2-octanoyl-sn-glycero-3-phosphoethanolamine + CoA. The enzyme catalyses a 1-acyl-sn-glycero-3-phosphoethanolamine + hexadecanoyl-CoA = 1-acyl-2-hexadecanoyl-sn-glycero-3-phosphoethanolamine + CoA. It carries out the reaction a 1-acyl-sn-glycero-3-phosphoethanolamine + octadecanoyl-CoA = 1-acyl-2-octadecanoyl-sn-glycero-3-phosphoethanolamine + CoA. The catalysed reaction is a 1-acyl-sn-glycero-3-phosphoethanolamine + (9Z)-octadecenoyl-CoA = 1-acyl-2-(9Z)-octadecenoyl-sn-glycero-3-phosphoethanolamine + CoA. It catalyses the reaction a 1-acyl-sn-glycero-3-phosphoethanolamine + (5Z,8Z,11Z,14Z)-eicosatetraenoyl-CoA = 1-acyl-2-(5Z,8Z,11Z,14Z)-eicosatetraenoyl-sn-glycero-3-phosphoethanolamine + CoA. The enzyme catalyses a 1-O-(1Z-alkenyl)-sn-glycero-3-phosphoethanolamine + octanoyl-CoA = 1-O-(1Z)-alkenyl-2-octanoyl-sn-glycero-3-phosphoethanolamine + CoA. It carries out the reaction a 1-O-(1Z-alkenyl)-sn-glycero-3-phosphoethanolamine + hexadecanoyl-CoA = 1-O-(1Z)-alkenyl-2-hexadecanoyl-sn-glycero-3-phosphoethanolamine + CoA. The catalysed reaction is a 1-O-(1Z-alkenyl)-sn-glycero-3-phosphoethanolamine + octadecanoyl-CoA = 1-O-(1Z)-alkenyl-2-octadecanoyl-sn-glycero-3-phosphoethanolamine + CoA. It catalyses the reaction a 1-O-(1Z-alkenyl)-sn-glycero-3-phosphoethanolamine + (9Z)-octadecenoyl-CoA = 1-O-(1Z)-alkenyl-2-(9Z)-octadecenoyl-sn-glycero-3-phosphoethanolamine + CoA. The enzyme catalyses a 1-O-(1Z-alkenyl)-sn-glycero-3-phosphoethanolamine + (5Z,8Z,11Z,14Z)-eicosatetraenoyl-CoA = 1-O-(1Z)-alkenyl-2-(5Z,8Z,11Z,14Z)-eicosatetraenoyl-sn-glycero-3-phosphoethanolamine + CoA. It carries out the reaction a 1-acyl-sn-glycero-3-phosphocholine + hexadecanoyl-CoA = 1-acyl-2-hexadecanoyl-sn-glycero-3-phosphocholine + CoA. The catalysed reaction is a 1-acyl-sn-glycero-3-phosphocholine + (9Z)-octadecenoyl-CoA = a 1-acyl-2-(9Z)-octadecenoyl-sn-glycero-3-phosphocholine + CoA. It catalyses the reaction 1-O-hexadecyl-sn-glycero-3-phosphocholine + (9Z)-octadecenoyl-CoA = 1-O-hexadecyl-2-(9Z)-octadecenoyl-sn-glycero-3-phosphocholine + CoA. The enzyme catalyses 1-O-hexadecyl-sn-glycero-3-phosphocholine + (5Z,8Z,11Z,14Z)-eicosatetraenoyl-CoA = 1-O-hexadecyl-2-(5Z,8Z,11Z,14Z)-eicosatetraenoyl-sn-glycero-3-phosphocholine + CoA. It carries out the reaction 1-hexadecanoyl-sn-glycero-3-phospho-L-serine + (9Z)-octadecenoyl-CoA = 1-hexadecanoyl-2-(9Z-octadecenoyl)-sn-glycero-3-phospho-L-serine + CoA. The catalysed reaction is 1-octadecanoyl-sn-glycero-3-phospho-(1'-sn-glycerol) + (9Z)-octadecenoyl-CoA = 1-octadecanoyl-2-(9Z-octadecenoyl)-sn-glycero-3-phospho-(1'-sn-glycerol) + CoA. It catalyses the reaction 1-octadecanoyl-sn-glycero-3-phospho-(1'-sn-glycerol) + (5Z,8Z,11Z,14Z)-eicosatetraenoyl-CoA = 1-octadecanoyl-2-(5Z,8Z,11Z,14Z-eicosatetraenoyl)-sn-glycero-3-phospho-(1'-sn-glycerol) + CoA. It functions in the pathway lipid metabolism; phospholipid metabolism. Functionally, displays acyl-CoA-dependent lysophospholipid acyltransferase activity with a subset of lysophospholipids as substrates; converts lysophosphatidylethanolamine to phosphatidylethanolamine, 1-alkenyl-lysophatidylethanolamine to 1-alkenyl-phosphatidylethanolamine, lysophosphatidylglycerol and alkyl-lysophosphatidylcholine to phosphatidylglycerol and alkyl-phosphatidylcholine, respectively. In contrast, has no lysophosphatidylinositol, glycerol-3-phosphate, diacylglycerol or lysophosphatidic acid acyltransferase activity. Prefers long chain acyl-CoAs (C16, C18) as acyl donors. Converts lysophosphatidylcholine to phosphatidycholine. The protein is Lysophospholipid acyltransferase LPCAT4 (Lpcat4) of Mus musculus (Mouse).